Here is a 113-residue protein sequence, read N- to C-terminus: Iron-sulfur cluster insertion protein ErpA (113 aa).

3 residues coordinate iron-sulfur cluster: cysteine 41, cysteine 105, and cysteine 107.

It belongs to the HesB/IscA family. As to quaternary structure, homodimer. The cofactor is iron-sulfur cluster.

Required for insertion of 4Fe-4S clusters for at least IspG. This Vibrio parahaemolyticus serotype O3:K6 (strain RIMD 2210633) protein is Iron-sulfur cluster insertion protein ErpA.